Here is a 1114-residue protein sequence, read N- to C-terminus: TBC1 domain family member 8B (1114 aa).

GRAM domains lie at 145–212 and 285–353; these read LKFE…EKTS and EQFK…DKTD. Polar residues predominate over residues 399-411; the sequence is TEVAVSSDSTGPS. Residues 399-420 are disordered; the sequence is TEVAVSSDSTGPSENFEEQPLT. In terms of domain architecture, Rab-GAP TBC spans 486-673; that stretch reads GIPETLRGEL…NVVDCFFYDG (188 aa). In terms of domain architecture, EF-hand spans 857-892; the sequence is NRDSLALWTFRLLDENSDCLINFKEFSSAIDIMYNG. 2 disordered regions span residues 938 to 957 and 1032 to 1061; these read SKPA…EKGK and LHSP…KDLP. Basic and acidic residues predominate over residues 940 to 957; sequence PADEKETESGRNSPEKGK.

As to quaternary structure, interacts (via domain Rab-GAP TBC) with RAB11B (in GTP-bound form).

It localises to the cytoplasm. It is found in the cytosol. Involved in vesicular recycling, probably as a RAB11B GTPase-activating protein. The polypeptide is TBC1 domain family member 8B (Tbc1d8b) (Mus musculus (Mouse)).